The chain runs to 29 residues: Dermaseptin-1 (29 aa).

The residue at position 29 (V29) is a Valine amide.

Expressed by the skin glands.

Its subcellular location is the secreted. In terms of biological role, antimicrobial peptide, active against the Gram-positive bacterium S.aureus, the Gram-negative bacteria E.coli and P.aeruginosa, and the yeasts C.albicans and P.brasiliensis. Has hemolytic activity (40% hemolysis at 128 ug/ml). The sequence is that of Dermaseptin-1 from Phyllomedusa tarsius (Brownbelly leaf frog).